The primary structure comprises 456 residues: Glycerol-3-phosphate acyltransferase 4 (456 aa).

An N-terminal signal peptide occupies residues 1–37 (MFLLLPFDSLIVNLLGISLTVLFTLLLVFIIVPAIFG). 2 helical membrane-spanning segments follow: residues 156–176 (ISLR…CFLL) and 180–200 (IALA…VGYL). Asn247 is a glycosylation site (N-linked (GlcNAc...) asparagine). The HXXXXD motif signature appears at 248–253 (HTSPID). Residues Asn327, Asn328, and Asn362 are each glycosylated (N-linked (GlcNAc...) asparagine).

This sequence belongs to the 1-acyl-sn-glycerol-3-phosphate acyltransferase family. As to expression, ubiquitous. High levels in testis. Relatively high level of expression in skeletal muscle and heart. Relatively low level of expression in lung.

It is found in the endoplasmic reticulum membrane. The enzyme catalyses sn-glycerol 3-phosphate + an acyl-CoA = a 1-acyl-sn-glycero-3-phosphate + CoA. The catalysed reaction is dodecanoyl-CoA + sn-glycerol 3-phosphate = 1-dodecanoyl-sn-glycerol 3-phosphate + CoA. It carries out the reaction sn-glycerol 3-phosphate + hexadecanoyl-CoA = 1-hexadecanoyl-sn-glycero-3-phosphate + CoA. It catalyses the reaction sn-glycerol 3-phosphate + octadecanoyl-CoA = 1-octadecanoyl-sn-glycero-3-phosphate + CoA. The enzyme catalyses sn-glycerol 3-phosphate + (9Z)-octadecenoyl-CoA = 1-(9Z-octadecenoyl)-sn-glycero-3-phosphate + CoA. The catalysed reaction is (9Z,12Z)-octadecadienoyl-CoA + sn-glycerol 3-phosphate = 1-(9Z,12Z)-octadecadienoyl-sn-glycero-3-phosphate + CoA. The protein operates within phospholipid metabolism; CDP-diacylglycerol biosynthesis; CDP-diacylglycerol from sn-glycerol 3-phosphate: step 1/3. Its activity is regulated as follows. Inhibited by N-ethylmaleimide (NEM). Its function is as follows. Converts glycerol-3-phosphate to 1-acyl-sn-glycerol-3-phosphate (lysophosphatidic acid or LPA) by incorporating an acyl moiety at the sn-1 position of the glycerol backbone. Active against both saturated and unsaturated long-chain fatty acyl-CoAs. Protects cells against lipotoxicity. The protein is Glycerol-3-phosphate acyltransferase 4 of Homo sapiens (Human).